Reading from the N-terminus, the 116-residue chain is Large ribosomal subunit protein bL19 (116 aa).

The protein belongs to the bacterial ribosomal protein bL19 family.

Its function is as follows. This protein is located at the 30S-50S ribosomal subunit interface and may play a role in the structure and function of the aminoacyl-tRNA binding site. In Fusobacterium nucleatum subsp. nucleatum (strain ATCC 25586 / DSM 15643 / BCRC 10681 / CIP 101130 / JCM 8532 / KCTC 2640 / LMG 13131 / VPI 4355), this protein is Large ribosomal subunit protein bL19.